Here is a 318-residue protein sequence, read N- to C-terminus: Ribosomal RNA small subunit methyltransferase H (318 aa).

S-adenosyl-L-methionine-binding positions include 33 to 35 (GGH), aspartate 53, phenylalanine 80, aspartate 101, and glutamine 108.

The protein belongs to the methyltransferase superfamily. RsmH family.

Its subcellular location is the cytoplasm. It carries out the reaction cytidine(1402) in 16S rRNA + S-adenosyl-L-methionine = N(4)-methylcytidine(1402) in 16S rRNA + S-adenosyl-L-homocysteine + H(+). Its function is as follows. Specifically methylates the N4 position of cytidine in position 1402 (C1402) of 16S rRNA. The chain is Ribosomal RNA small subunit methyltransferase H from Symbiobacterium thermophilum (strain DSM 24528 / JCM 14929 / IAM 14863 / T).